The primary structure comprises 417 residues: Gamma-glutamyl phosphate reductase (417 aa).

This sequence belongs to the gamma-glutamyl phosphate reductase family.

The protein resides in the cytoplasm. It catalyses the reaction L-glutamate 5-semialdehyde + phosphate + NADP(+) = L-glutamyl 5-phosphate + NADPH + H(+). It participates in amino-acid biosynthesis; L-proline biosynthesis; L-glutamate 5-semialdehyde from L-glutamate: step 2/2. Its function is as follows. Catalyzes the NADPH-dependent reduction of L-glutamate 5-phosphate into L-glutamate 5-semialdehyde and phosphate. The product spontaneously undergoes cyclization to form 1-pyrroline-5-carboxylate. The sequence is that of Gamma-glutamyl phosphate reductase from Polynucleobacter asymbioticus (strain DSM 18221 / CIP 109841 / QLW-P1DMWA-1) (Polynucleobacter necessarius subsp. asymbioticus).